The sequence spans 134 residues: Small ribosomal subunit protein bS6 (134 aa).

The interval 100-134 (SFLARDETDRRERSEETAEGEGEPDHSANEAVVTA) is disordered. The segment covering 103–115 (ARDETDRRERSEE) has biased composition (basic and acidic residues).

Belongs to the bacterial ribosomal protein bS6 family.

Functionally, binds together with bS18 to 16S ribosomal RNA. This is Small ribosomal subunit protein bS6 from Acidithiobacillus ferrooxidans (strain ATCC 23270 / DSM 14882 / CIP 104768 / NCIMB 8455) (Ferrobacillus ferrooxidans (strain ATCC 23270)).